We begin with the raw amino-acid sequence, 297 residues long: ATP phosphoribosyltransferase (297 aa).

Met1 carries the post-translational modification N-acetylmethionine.

The protein belongs to the ATP phosphoribosyltransferase family.

The protein localises to the cytoplasm. It catalyses the reaction 1-(5-phospho-beta-D-ribosyl)-ATP + diphosphate = 5-phospho-alpha-D-ribose 1-diphosphate + ATP. It participates in amino-acid biosynthesis; L-histidine biosynthesis; L-histidine from 5-phospho-alpha-D-ribose 1-diphosphate: step 1/9. In terms of biological role, catalyzes the condensation of ATP and 5-phosphoribose 1-diphosphate to form N'-(5'-phosphoribosyl)-ATP (PR-ATP). Has a crucial role in the pathway because the rate of histidine biosynthesis seems to be controlled primarily by regulation of the enzymatic activity. This Saccharomyces cerevisiae (strain ATCC 204508 / S288c) (Baker's yeast) protein is ATP phosphoribosyltransferase (HIS1).